The sequence spans 365 residues: Chorismate synthase (365 aa).

Residues 41-61 (IQKELDRRRPGQSEVSTPRHE) are disordered. R48 contacts NADP(+). FMN-binding positions include 125 to 127 (RSS), G285, 300 to 304 (KPTPS), and R327.

This sequence belongs to the chorismate synthase family. The cofactor is FMNH2.

It carries out the reaction 5-O-(1-carboxyvinyl)-3-phosphoshikimate = chorismate + phosphate. The protein operates within metabolic intermediate biosynthesis; chorismate biosynthesis; chorismate from D-erythrose 4-phosphate and phosphoenolpyruvate: step 7/7. Functionally, catalyzes the anti-1,4-elimination of the C-3 phosphate and the C-6 proR hydrogen from 5-enolpyruvylshikimate-3-phosphate (EPSP) to yield chorismate, which is the branch point compound that serves as the starting substrate for the three terminal pathways of aromatic amino acid biosynthesis. This reaction introduces a second double bond into the aromatic ring system. This Methanosarcina barkeri (strain Fusaro / DSM 804) protein is Chorismate synthase.